We begin with the raw amino-acid sequence, 561 residues long: Putative transport protein YbjL (561 aa).

5 consecutive transmembrane segments (helical) span residues 8–28, 32–52, 66–86, 94–114, and 158–178; these read LLNG…LCLG, LGSI…LLGQ, FMLF…SIFF, MLAL…GKLF, and NLSL…IVGA. RCK C-terminal domains are found at residues 200 to 288 and 292 to 373; these read RGLD…SFRN and VFDR…RIGF. The next 5 helical transmembrane spans lie at 383-403, 406-426, 451-471, 475-495, and 540-560; these read LLAF…TFQF, FSFG…LGFM, VFMA…LGAI, MLIA…LFGA, and AIAN…WPGL.

Belongs to the AAE transporter (TC 2.A.81) family. YbjL subfamily.

It localises to the cell membrane. The polypeptide is Putative transport protein YbjL (Escherichia coli O139:H28 (strain E24377A / ETEC)).